The following is a 515-amino-acid chain: MASDTPGFYMDKLNKYRQMHGVAITYKELSTSGPPHDRRFTFQVLIDEKEFPEAKGRSKQEARNAAAKLAVDILDNENKVDCHTSASEQGLFVGNYIGLVNSFAQKKKLSVNYEQCEPNSELPQRFICKCKIGQTMYGTGSGVTKQEAKQLAAKEAYQKLLKSPPKTAGTSSSVVTSTFSGFSSSSSMTSNGVSQSAPGSFSSENVFTNGLGENKRKSGVKVSPDDVQRNKYTLDARFNSDFEDIEEIGLGGFGQVFKAKHRIDGKRYAIKRVKYNTEKAEHEVQALAELNHVNIVQYHSCWEGVDYDPEHSMSDTSRYKTRCLFIQMEFCDKGTLEQWMRNRNQSKVDKALILDLYEQIVTGVEYIHSKGLIHRDLKPGNIFLVDERHIKIGDFGLATALENDGKSRTRRTGTLQYMSPEQLFLKHYGKEVDIFALGLILAELLHTCFTESEKIKFFESLRKGDFSNDIFDNKEKSLLKKLLSEKPKDRPETSEILKTLAEWRNISEKKKRNTC.

At alanine 2 the chain carries N-acetylalanine. One can recognise a DRBM 1 domain in the interval phenylalanine 8–asparagine 76. Residue lysine 68 forms a Glycyl lysine isopeptide (Lys-Gly) (interchain with G-Cter in ISG15) linkage. Threonine 84 is modified (phosphothreonine). The region spanning asparagine 95–lysine 162 is the DRBM 2 domain. At tyrosine 96 the chain carries Phosphotyrosine; by autocatalysis. Lysine 154 participates in a covalent cross-link: Glycyl lysine isopeptide (Lys-Gly) (interchain with G-Cter in ISG15). The residue at position 157 (tyrosine 157) is a Phosphotyrosine; by autocatalysis. A disordered region spans residues glutamate 204–proline 224. Phosphothreonine is present on threonine 233. The segment at aspartate 241–cysteine 515 is interaction with TRAF5. The 263-residue stretch at phenylalanine 242–arginine 504 folds into the Protein kinase domain. Isoleucine 248–valine 256 is an ATP binding site. The residue at position 268 (tyrosine 268) is a Phosphotyrosine; by autocatalysis. Lysine 271 is a binding site for ATP. The active-site Proton acceptor is the aspartate 376. Phosphothreonine; by autocatalysis is present on residues threonine 409 and threonine 414. Position 419 is a phosphoserine (serine 419).

This sequence belongs to the protein kinase superfamily. Ser/Thr protein kinase family. GCN2 subfamily. In terms of assembly, homodimer. Interacts with DNAJC3 and STRBP. Forms a complex with FANCA, FANCC, FANCG and HSP70. Interacts with ADAR/ADAR1. The inactive form interacts with NCK1. Interacts (via the kinase catalytic domain) with STAT3 (via SH2 domain), TRAF2 (C-terminus), TRAF5 (C-terminus) and TRAF6 (C-terminus). Interacts with MAP2K6, TARBP2, NLRP1, NLRC4 and AIM2. Interacts (via DRBM 1 domain) with DUS2L (via DRBM domain). Interacts with DHX9 (via N-terminus) and this interaction is dependent upon activation of the kinase. The inactive form interacts with GSN. Interacts with IKBKB/IKKB, NPM1, NLRP3 and IRS1. Autophosphorylated on several Ser, Thr and Tyr residues. Autophosphorylation of Thr-414 is dependent on Thr-409 and is stimulated by dsRNA binding and dimerization. Autophosphorylation apparently leads to the activation of the kinase. Tyrosine autophosphorylation is essential for efficient dsRNA-binding, dimerization, and kinase activation. Expressed in heart, lung, brain, kidney, testes, thymus and bone marrow.

The protein resides in the cytoplasm. It is found in the nucleus. Its subcellular location is the perinuclear region. The enzyme catalyses L-seryl-[protein] + ATP = O-phospho-L-seryl-[protein] + ADP + H(+). The catalysed reaction is L-threonyl-[protein] + ATP = O-phospho-L-threonyl-[protein] + ADP + H(+). It catalyses the reaction L-tyrosyl-[protein] + ATP = O-phospho-L-tyrosyl-[protein] + ADP + H(+). Initially produced in an inactive form and is activated by binding to viral dsRNA, which causes dimerization and autophosphorylation in the activation loop and stimulation of function. ISGylation can activate it in the absence of viral infection. Can also be activated by heparin, pro-inflammatory stimuli, growth factors, cytokines, oxidative stress and the cellular protein PRKRA. Activity is markedly stimulated by manganese ions. Activation is blocked by the cellular proteins TARBP2, DUS2L, NPM1, NCK1 and ADAR. Functionally, IFN-induced dsRNA-dependent serine/threonine-protein kinase that phosphorylates the alpha subunit of eukaryotic translation initiation factor 2 (EIF2S1/eIF-2-alpha) and plays a key role in the innate immune response to viral infection. Inhibits viral replication via the integrated stress response (ISR): EIF2S1/eIF-2-alpha phosphorylation in response to viral infection converts EIF2S1/eIF-2-alpha in a global protein synthesis inhibitor, resulting to a shutdown of cellular and viral protein synthesis, while concomitantly initiating the preferential translation of ISR-specific mRNAs, such as the transcriptional activator ATF4. Exerts its antiviral activity on a wide range of DNA and RNA viruses including west nile virus (WNV), sindbis virus (SV), foot-and-mouth virus (FMDV), semliki Forest virus (SFV) and lymphocytic choriomeningitis virus (LCMV). Also involved in the regulation of signal transduction, apoptosis, cell proliferation and differentiation: phosphorylates other substrates including p53/TP53, PPP2R5A, DHX9, ILF3, and IRS1. In addition to serine/threonine-protein kinase activity, also has tyrosine-protein kinase activity and phosphorylates CDK1 at 'Tyr-4' upon DNA damage, facilitating its ubiquitination and proteasomal degradation. Either as an adapter protein and/or via its kinase activity, can regulate various signaling pathways (p38 MAP kinase, NF-kappa-B and insulin signaling pathways) and transcription factors (JUN, STAT1, STAT3, IRF1, ATF3) involved in the expression of genes encoding pro-inflammatory cytokines and IFNs. Activates the NF-kappa-B pathway via interaction with IKBKB and TRAF family of proteins and activates the p38 MAP kinase pathway via interaction with MAP2K6. Can act as both a positive and negative regulator of the insulin signaling pathway (ISP). Negatively regulates ISP by inducing the inhibitory phosphorylation of insulin receptor substrate 1 (IRS1) at 'Ser-312' and positively regulates ISP via phosphorylation of PPP2R5A which activates FOXO1, which in turn up-regulates the expression of insulin receptor substrate 2 (IRS2). Can regulate NLRP3 inflammasome assembly and the activation of NLRP3, NLRP1, AIM2 and NLRC4 inflammasomes. Plays a role in the regulation of the cytoskeleton by binding to gelsolin (GSN), sequestering the protein in an inactive conformation away from actin. The polypeptide is Interferon-induced, double-stranded RNA-activated protein kinase (Eif2ak2) (Mus musculus (Mouse)).